The primary structure comprises 294 residues: 4-hydroxy-tetrahydrodipicolinate synthase (294 aa).

A pyruvate-binding site is contributed by Thr47. Tyr135 acts as the Proton donor/acceptor in catalysis. The active-site Schiff-base intermediate with substrate is the Lys163. Thr205 serves as a coordination point for pyruvate.

Belongs to the DapA family. In terms of assembly, homotetramer; dimer of dimers.

The protein localises to the cytoplasm. The enzyme catalyses L-aspartate 4-semialdehyde + pyruvate = (2S,4S)-4-hydroxy-2,3,4,5-tetrahydrodipicolinate + H2O + H(+). The protein operates within amino-acid biosynthesis; L-lysine biosynthesis via DAP pathway; (S)-tetrahydrodipicolinate from L-aspartate: step 3/4. Catalyzes the condensation of (S)-aspartate-beta-semialdehyde [(S)-ASA] and pyruvate to 4-hydroxy-tetrahydrodipicolinate (HTPA). This chain is 4-hydroxy-tetrahydrodipicolinate synthase, found in Rickettsia montanensis.